The following is a 105-amino-acid chain: Small ribosomal subunit protein uS10 (105 aa).

This sequence belongs to the universal ribosomal protein uS10 family. Part of the 30S ribosomal subunit.

Functionally, involved in the binding of tRNA to the ribosomes. The chain is Small ribosomal subunit protein uS10 from Roseobacter denitrificans (strain ATCC 33942 / OCh 114) (Erythrobacter sp. (strain OCh 114)).